Consider the following 499-residue polypeptide: Probable cytosol aminopeptidase (499 aa).

Lys268 and Asp273 together coordinate Mn(2+). Lys280 is an active-site residue. 3 residues coordinate Mn(2+): Asp291, Asp350, and Glu352. Arg354 is an active-site residue.

The protein belongs to the peptidase M17 family. The cofactor is Mn(2+).

It is found in the cytoplasm. It carries out the reaction Release of an N-terminal amino acid, Xaa-|-Yaa-, in which Xaa is preferably Leu, but may be other amino acids including Pro although not Arg or Lys, and Yaa may be Pro. Amino acid amides and methyl esters are also readily hydrolyzed, but rates on arylamides are exceedingly low.. It catalyses the reaction Release of an N-terminal amino acid, preferentially leucine, but not glutamic or aspartic acids.. Functionally, presumably involved in the processing and regular turnover of intracellular proteins. Catalyzes the removal of unsubstituted N-terminal amino acids from various peptides. In Halorhodospira halophila (strain DSM 244 / SL1) (Ectothiorhodospira halophila (strain DSM 244 / SL1)), this protein is Probable cytosol aminopeptidase.